The primary structure comprises 511 residues: Coatomer subunit delta (511 aa).

Positions 167 to 177 (QQARRDAERQG) are enriched in basic and acidic residues. Residues 167–188 (QQARRDAERQGKKAPGFGGFGS) form a disordered region. Ser-223 carries the post-translational modification Phosphoserine. 2 positions are modified to N6-acetyllysine: Lys-233 and Lys-241. The residue at position 244 (Ser-244) is a Phosphoserine. Positions 271-511 (MESVHMKIEE…TFLVDKYEIL (241 aa)) constitute an MHD domain. Lys-309 and Lys-351 each carry N6-acetyllysine. Ser-493 carries the post-translational modification Phosphoserine.

This sequence belongs to the adaptor complexes medium subunit family. Delta-COP subfamily. As to quaternary structure, oligomeric complex that consists of at least the alpha, beta, beta', gamma, delta, epsilon and zeta subunits.

It localises to the cytoplasm. Its subcellular location is the golgi apparatus membrane. The protein localises to the cytoplasmic vesicle. It is found in the COPI-coated vesicle membrane. The coatomer is a cytosolic protein complex that binds to dilysine motifs and reversibly associates with Golgi non-clathrin-coated vesicles, which further mediate biosynthetic protein transport from the ER, via the Golgi up to the trans Golgi network. Coatomer complex is required for budding from Golgi membranes, and is essential for the retrograde Golgi-to-ER transport of dilysine-tagged proteins. In mammals, the coatomer can only be recruited by membranes associated to ADP-ribosylation factors (ARFs), which are small GTP-binding proteins; the complex also influences the Golgi structural integrity, as well as the processing, activity, and endocytic recycling of LDL receptors. This chain is Coatomer subunit delta (ARCN1), found in Pongo abelii (Sumatran orangutan).